The following is an 83-amino-acid chain: MAGPWTIEPGKNHGGIPTWAWPRSTTVHVQVVGGGRGRVRMQAGASPDEDNDVNGETSFSRSFGGSRLNVTNIGSRTLKVWTA.

A disordered region spans residues arginine 40–glycine 65. The span at asparagine 54–glycine 65 shows a compositional bias: polar residues.

This is an uncharacterized protein from Dictyostelium discoideum (Social amoeba).